Reading from the N-terminus, the 272-residue chain is Pyrroline-5-carboxylate reductase 3 (272 aa).

Belongs to the pyrroline-5-carboxylate reductase family.

It localises to the cytoplasm. The enzyme catalyses L-proline + NADP(+) = (S)-1-pyrroline-5-carboxylate + NADPH + 2 H(+). It catalyses the reaction L-proline + NAD(+) = (S)-1-pyrroline-5-carboxylate + NADH + 2 H(+). The protein operates within amino-acid biosynthesis; L-proline biosynthesis; L-proline from L-glutamate 5-semialdehyde: step 1/1. Its function is as follows. Catalyzes the reduction of 1-pyrroline-5-carboxylate (PCA) to L-proline. This chain is Pyrroline-5-carboxylate reductase 3 (proG), found in Bacillus subtilis (strain 168).